The chain runs to 59 residues: Pycsar effector protein MePycTM (59 aa).

Residues 36–56 traverse the membrane as a helical segment; the sequence is VAVAIYLLGAAMLSSGAAVLA.

It is found in the cell membrane. Pycsar (pyrimidine cyclase system for antiphage resistance) provides immunity against bacteriophage. The pyrimidine cyclase (PycC) synthesizes cyclic nucleotides in response to infection; these serve as specific second messenger signals. The signals activate the adjacent effector, leading to bacterial cell death and abortive phage infection. A clade D Pycsar system. Functionally, the effector gene of a two-gene Pycsar system. Expression of this and adjacent uridylate cyclase MePycC (AC A0A1C5G2V9) probably confers resistance to bacteriophage. The genes are probably only expressed in response to bacteriophage infection. Probably only responds to cUMP (produced by its cognate NTP cyclase), acts by impairing membrane integrity. In Micromonospora echinofusca, this protein is Pycsar effector protein MePycTM.